Consider the following 351-residue polypeptide: Mannonate dehydratase (351 aa).

It belongs to the mannonate dehydratase family. Fe(2+) is required as a cofactor. It depends on Mn(2+) as a cofactor.

The catalysed reaction is D-mannonate = 2-dehydro-3-deoxy-D-gluconate + H2O. It functions in the pathway carbohydrate metabolism; pentose and glucuronate interconversion. In terms of biological role, catalyzes the dehydration of D-mannonate. The polypeptide is Mannonate dehydratase (Clostridium acetobutylicum (strain ATCC 824 / DSM 792 / JCM 1419 / IAM 19013 / LMG 5710 / NBRC 13948 / NRRL B-527 / VKM B-1787 / 2291 / W)).